A 341-amino-acid chain; its full sequence is Bis(monoacylglycero)phosphate synthase CLN5 (341 aa).

Topologically, residues 1–13 (MLRGGPCGAHWRP) are cytoplasmic. The chain crosses the membrane as a helical; Signal-anchor for type II membrane protein span at residues 14-30 (ALALALLGLATILGASP). At 31–341 (TSGQRWPVPY…PTRHTTFTDL (311 aa)) the chain is on the lumenal side. 2 disulfide bridges follow: cysteine 53–cysteine 142 and cysteine 60–cysteine 148. Histidine 100 functions as the Proton acceptor in the catalytic mechanism. N-linked (GlcNAc...) asparagine glycans are attached at residues asparagine 113, asparagine 126, asparagine 161, and asparagine 186. Residue cysteine 214 is the Nucleophile; Acyl-thioester intermediate of the active site. N-linked (GlcNAc...) asparagine glycosylation is found at asparagine 238, asparagine 254, and asparagine 264. Positions 287 to 326 (FLMNFLKIFDTVIIHRQFYLFYNFEYWFLPMKPPFVKITY) are membrane-anchoring.

This sequence belongs to the CLN5 family. As to quaternary structure, multimer. Interacts with PPT1, TPP1, CLN3, CLN6, CLN8, ATP5F1A and ATP5F1B. Interacts with SORT1, RAB5A and RAB7A. In terms of processing, N-glycosylated with both high mannose and complex type sugars. Glycosylation is important for proper folding and trafficking to the lysosomes. The type II membrane signal anchor is proteolytically cleaved to produce a mature form that is transported to the lysosomes (Bis(monoacylglycero)phosphate synthase CLN5, secreted form). Post-translationally, can undergo proteolytic cleavage at the C-terminus, probably by a cysteine protease and may involve the removal of approximately 10-15 residues from the C-terminal end. In terms of tissue distribution, heart, kidney, liver, spleen, muscle and rectum (at protein level).

It is found in the lysosome. It localises to the membrane. The catalysed reaction is S-hexadecanoyl-L-cysteinyl-[protein] + H2O = L-cysteinyl-[protein] + hexadecanoate + H(+). The enzyme catalyses 2 1-acyl-sn-glycero-3-phospho-(1'-sn-glycerol) = 1-acyl-sn-glycero-3-phospho-(3'-acyl-sn-1'-glycerol) + sn-glycero-3-phospho-(1'-sn-glycerol). It catalyses the reaction 2 1-(9Z-octadecenoyl)-sn-glycero-3-phospho-(1'-sn-glycerol) = 1-(9Z-octadecenoyl)-sn-glycero-3-phospho-(3'-(9Z-octadecenoyl)-1'-sn-glycerol) + sn-glycero-3-phospho-(1'-sn-glycerol). It carries out the reaction 2 1-octadecanoyl-sn-glycero-3-phospho-(1'-sn-glycerol) = 1-octadecanoyl-sn-glycero-3-phospho-(3'-octadecanoyl-1'-sn-glycerol) + sn-glycero-3-phospho-(1'-sn-glycerol). The catalysed reaction is 2 1-hexadecanoyl-sn-glycero-3-phospho-(1'-sn-glycerol) = 1-hexadecanoyl-sn-glycero-3-phospho-(3'-hexadecanoyl-1'-sn-glycerol) + sn-glycero-3-phospho-(1'-sn-glycerol). The enzyme catalyses 2 1-tetradecanoyl-sn-glycero-3-phospho-(1'-sn-glycerol) = 1-tetradecanoyl-sn-glycero-3-phospho-(3'-tetradecanoyl-1'-sn-glycerol) + sn-glycero-3-phospho-(1'-sn-glycerol). In terms of biological role, catalyzes the synthesis of bis(monoacylglycero)phosphate (BMP) via transacylation of 2 molecules of lysophosphatidylglycerol (LPG). BMP also known as lysobisphosphatidic acid plays a key role in the formation of intraluminal vesicles and in maintaining intracellular cholesterol homeostasis. Can use only LPG as the exclusive lysophospholipid acyl donor for base exchange and displays BMP synthase activity towards various LPGs (LPG 14:0, LPG 16:0, LPG 18:0, LPG 18:1) with a higher preference for longer chain lengths. Plays a role in influencing the retrograde trafficking of lysosomal sorting receptors SORT1 and IGF2R from the endosomes to the trans-Golgi network by controlling the recruitment of retromer complex to the endosomal membrane. Regulates the localization and activation of RAB7A which is required to recruit the retromer complex to the endosomal membrane. Its function is as follows. Exhibits palmitoyl protein thioesterase (S-depalmitoylation) activity in vitro and most likely plays a role in protein S-depalmitoylation. This Mus musculus (Mouse) protein is Bis(monoacylglycero)phosphate synthase CLN5 (Cln5).